Consider the following 342-residue polypeptide: Elongation factor Ts (342 aa).

An involved in Mg(2+) ion dislocation from EF-Tu region spans residues 79–82 (TDFV).

The protein belongs to the EF-Ts family.

It localises to the cytoplasm. Associates with the EF-Tu.GDP complex and induces the exchange of GDP to GTP. It remains bound to the aminoacyl-tRNA.EF-Tu.GTP complex up to the GTP hydrolysis stage on the ribosome. The sequence is that of Elongation factor Ts (tsf) from Lactococcus lactis subsp. lactis (strain IL1403) (Streptococcus lactis).